Consider the following 604-residue polypeptide: Serine/threonine-protein kinase A-Raf (604 aa).

The 73-residue stretch at 19–91 (GTVKVYLPNK…DGEELIVEVL (73 aa)) folds into the RBD domain. A Phorbol-ester/DAG-type zinc finger spans residues 98-144 (MHNFVRKTFFSLAFCDFCLKFLFHGFRCQTCGYKFHQHCSSKVPTVC). The Zn(2+) site is built by H99, C112, C115, C125, C128, H133, C136, and C144. S157 and S162 each carry phosphoserine. 2 disordered regions span residues 177–222 (NELL…HMVS) and 241–288 (TDAA…EKKK). T181 is subject to Phosphothreonine. At S186 the chain carries Phosphoserine. Over residues 210 to 222 (IRSTSTPNVHMVS) the composition is skewed to polar residues. Positions 252-265 (PRGSPSPASVSSGR) are enriched in low complexity. 2 positions are modified to phosphoserine: S255 and S267. The span at 272-287 (LPSEQRERKSLADEKK) shows a compositional bias: basic and acidic residues. The Protein kinase domain occupies 308–568 (VQLLKRIGTG…PQILATIELL (261 aa)). ATP-binding positions include 314-322 (IGTGSFGTV) and K334. T316 is modified (phosphothreonine). The active-site Proton acceptor is D427.

Belongs to the protein kinase superfamily. TKL Ser/Thr protein kinase family. RAF subfamily. As to quaternary structure, interacts with TH1L/NELFD. The cofactor is Zn(2+). In terms of processing, dephosphorylation by the SHOC2-MRAS-PP1c (SMP) complex consisting of SHOC2, GTP-bound M-Ras/MRAS and the catalytic subunit of protein phosphatase 1 (PPP1CA, PPP1CB or PPP1CC); this relieves inactivation and stimulates kinase activity.

It catalyses the reaction L-seryl-[protein] + ATP = O-phospho-L-seryl-[protein] + ADP + H(+). It carries out the reaction L-threonyl-[protein] + ATP = O-phospho-L-threonyl-[protein] + ADP + H(+). Involved in the transduction of mitogenic signals from the cell membrane to the nucleus. May also regulate the TOR signaling cascade. Phosphorylates PFKFB2. This Mus musculus (Mouse) protein is Serine/threonine-protein kinase A-Raf (Araf).